The following is a 238-amino-acid chain: Ribosomal RNA small subunit methyltransferase G (238 aa).

Residues Gly-106, Leu-111, 157 to 158, and Arg-170 each bind S-adenosyl-L-methionine; that span reads IE.

Belongs to the methyltransferase superfamily. RNA methyltransferase RsmG family.

Its subcellular location is the cytoplasm. The catalysed reaction is guanosine(527) in 16S rRNA + S-adenosyl-L-methionine = N(7)-methylguanosine(527) in 16S rRNA + S-adenosyl-L-homocysteine. In terms of biological role, specifically methylates the N7 position of guanine in position 527 of 16S rRNA. In Psychrobacter arcticus (strain DSM 17307 / VKM B-2377 / 273-4), this protein is Ribosomal RNA small subunit methyltransferase G.